The sequence spans 831 residues: Zinc transporter ZIP10 (831 aa).

A signal peptide spans 1 to 25; it reads MKVHMHTKFCLICLLTFIFHHCNHC. Residues 126 to 318 are disordered; it reads HNHQHSHNHL…RKREAPHVKN (193 aa). Over residues 138-147 the composition is skewed to polar residues; it reads ENQTVTSVST. Residue asparagine 139 is glycosylated (N-linked (GlcNAc...) asparagine). Over residues 152–171 the composition is skewed to basic and acidic residues; sequence KCDPEKETVEVSVKSDDKHM. Over residues 172–188 the composition is skewed to basic residues; that stretch reads HDHNHRLRHHHRLHHHL. The span at 189-198 shows a compositional bias: basic and acidic residues; sequence DHNNTHHFHN. 2 N-linked (GlcNAc...) asparagine glycosylation sites follow: asparagine 198 and asparagine 218. Polar residues predominate over residues 211-221; that stretch reads NEPSTETNKTQ. Residues 229-238 show a composition bias toward basic residues; that stretch reads PKGKRKKKGR. Basic and acidic residues-rich tracts occupy residues 256-273 and 281-315; these read DQGE…DRVH and HLPE…EAPH. Asparagine 339 carries N-linked (GlcNAc...) asparagine glycosylation. 2 consecutive transmembrane segments (helical) span residues 411-431 and 438-458; these read IISI…VPII and FLLT…ALLH. A disordered region spans residues 464–484; it reads QGGHDHSHQHAHGHGHSHGHE. Residues 495-515 form a helical membrane-spanning segment; sequence VLKGLVALGGIYLLFIIEHCI. Threonine 536 and threonine 553 each carry phosphothreonine. A Phosphoserine modification is found at serine 591. Helical transmembrane passes span 687–707, 732–752, 759–779, and 801–821; these read AIGA…IAVF, IVYN…GTAV, ITLW…LVDM, and FILQ…IALY.

This sequence belongs to the ZIP transporter (TC 2.A.5) family. Interacts with SLC39A6; which triggers cells to undergo EMT and mitosis. Found in a complex with SLC39A6, SLC39A10 and with the 'Ser-727' phosphorylated form of STAT3 throughout mitosis. Found in a complex with SLC39A6, SLC39A10 and with NCAM1; this complex controls NCAM1 phosphorylation and integration into focal adhesion complexes during epithelial-tomesenchymal transition. Found in a complex with SLC39A6, SLC39A10 and with GSK3B that controls NCAM1 phosphorylation. Post-translationally, undergoes N-terminal ectodomain shedding.

It is found in the cell membrane. The protein resides in the apical cell membrane. The enzyme catalyses Zn(2+)(in) = Zn(2+)(out). Functionally, zinc-influx transporter. When associated with SLC39A6, the heterodimer formed by SLC39A10 and SLC39A6 mediates cellular zinc uptake to trigger cells to undergo epithelial-to-mesenchymal transition (EMT). SLC39A10-SLC39A6 heterodimers play also an essentiel role in initiating mitosis by importing zinc into cells to initiate a pathway resulting in the onset of mitosis. Plays an important for both mature B-cell maintenance and humoral immune responses. When associated with SLC39A10, the heterodimer controls NCAM1 phosphorylation and integration into focal adhesion complexes during EMT. This Homo sapiens (Human) protein is Zinc transporter ZIP10.